Consider the following 358-residue polypeptide: Probable (S)-tetrahydroprotoberberine N-methyltransferase 2 (358 aa).

7 residues coordinate S-adenosyl-L-methionine: Ser-98, Gly-136, Asn-160, Gln-164, Asp-186, Val-187, and Ile-202. Residue Cys-333 is part of the active site.

It belongs to the CFA/CMAS family. As to quaternary structure, homodimer.

It is found in the cytoplasm. The enzyme catalyses (S)-stylopine + S-adenosyl-L-methionine = (S)-cis-N-methylstylopine + S-adenosyl-L-homocysteine. It catalyses the reaction (S)-tetrahydropalmatine + S-adenosyl-L-methionine = (S)-cis-N-methyltetrahydropalmatine + S-adenosyl-L-homocysteine. Its pathway is alkaloid biosynthesis. N-methyltransferase with a strict substrate specificity for (R,S)-tetrahydropalmatine or (R,S)-stylopine. The polypeptide is Probable (S)-tetrahydroprotoberberine N-methyltransferase 2 (Papaver bracteatum (Great scarlet poppy)).